Consider the following 563-residue polypeptide: ATP-dependent RNA helicase DeaD (563 aa).

Residues 13-41 (ATFADLQIHPRVLRAIGDVGYESPTAIQA) carry the Q motif motif. Positions 44–215 (IPALMAGSDV…AKYLHDPFEV (172 aa)) constitute a Helicase ATP-binding domain. 57-64 (AQTGTGKT) serves as a coordination point for ATP. The DEAD box signature appears at 163-166 (DEAD). The Helicase C-terminal domain occupies 226–385 (NISQSYIQVA…AQLPTVEDVN (160 aa)). 2 disordered regions span residues 441-470 (LMAPDPPLSRRNRDQRRDRPQRPKRRPDLT) and 543-563 (YRPPDAARRHNGGKPRRKHVG). Basic and acidic residues predominate over residues 451-461 (RNRDQRRDRPQ). Positions 551-563 (RHNGGKPRRKHVG) are enriched in basic residues.

This sequence belongs to the DEAD box helicase family. DeaD/CsdA subfamily.

The protein localises to the cytoplasm. The catalysed reaction is ATP + H2O = ADP + phosphate + H(+). DEAD-box RNA helicase involved in various cellular processes at low temperature, including ribosome biogenesis, mRNA degradation and translation initiation. The polypeptide is ATP-dependent RNA helicase DeaD (Mycobacterium tuberculosis (strain CDC 1551 / Oshkosh)).